The chain runs to 657 residues: Zinc finger protein 630 (657 aa).

Residues 8–79 (VTFEDVAVDF…ESELSRWIYP (72 aa)) enclose the KRAB domain. 2 C2H2-type zinc fingers span residues 263-285 (NVCSMCGKAFIKKSQLIIHQRIH) and 291-313 (YVCGDCRKAFSEKSHLIVHQRIH). The C2H2-type 3; degenerate zinc finger occupies 319–341 (YECTKYGRAFSRKSPFTVHQRVH). 9 C2H2-type zinc fingers span residues 347-369 (YECFECPKAFSQKSHLIIHQRVH), 375-397 (FECSECRKAFCEMSHLFIHQITH), 403-425 (YECTECGKTFPRKTQLIIHQRTH), 431-453 (YKCGECGKTFCQQSHLIGHQRIH), 459-481 (YVCTDCGKAFSQKSHLTGHQRLH), 487-509 (YMCTECGKSFSQKSPLIIHQRIH), 515-537 (YQCGECGKTFSQKSLLIIHLRVH), 543-565 (YECTECGRAFSLKSHLILHQRGH), and 571-593 (YECSECGKAFCGKSPLIIHQKTH). A C2H2-type 13; degenerate zinc finger spans residues 599-621 (PECAESGMTFFWKSQMITYQRRH). A C2H2-type 14; degenerate zinc finger spans residues 627–649 (SRCSDCGKAFCQHVYFTGHQNPY).

This sequence belongs to the krueppel C2H2-type zinc-finger protein family.

Its subcellular location is the nucleus. Functionally, may be involved in transcriptional regulation. In Homo sapiens (Human), this protein is Zinc finger protein 630 (ZNF630).